The chain runs to 276 residues: Putative non-heme chloroperoxidase (276 aa).

Residues Pro26–His263 enclose the AB hydrolase-1 domain. Residues Ser99, Asp228, and His257 contribute to the active site.

Belongs to the AB hydrolase superfamily. Bacterial non-heme haloperoxidase / perhydrolase family.

The sequence is that of Putative non-heme chloroperoxidase from Synechocystis sp. (strain ATCC 27184 / PCC 6803 / Kazusa).